The primary structure comprises 256 residues: Stanniocalcin (256 aa).

The N-terminal stretch at M1–A18 is a signal peptide. Positions T19 to R33 are excised as a propeptide. N62 is a glycosylation site (N-linked (GlcNAc...) asparagine). Residues Q204–L241 form a disordered region.

It belongs to the stanniocalcin family. As to quaternary structure, homodimer; disulfide-linked. As to expression, produced and secreted by the corpuscles of Stannius.

It is found in the secreted. Its primary function is the prevention of hypercalcemia. Upon release into the circulation, it lowers calcium transport by the gills, thereby reducing its rate of influx from the environment into the extracellular compartment. STC also stimulates phosphate reabsorption by renal proximal tubules. The consequence of this action is increased levels of plasma phosphate, which combines with excess calcium and promotes its disposal into bone and scales. This is Stanniocalcin (stc) from Oncorhynchus mykiss (Rainbow trout).